We begin with the raw amino-acid sequence, 549 residues long: Cytochrome c oxidase subunit 1 homolog, bacteroid (549 aa).

A run of 3 helical transmembrane segments spans residues isoleucine 12–alanine 32, proline 39–valine 59, and phenylalanine 87–alanine 107. Residue histidine 131 coordinates heme b. Transmembrane regions (helical) follow at residues threonine 132–valine 152, phenylalanine 168–valine 188, alanine 201–isoleucine 221, isoleucine 228–glycine 248, glycine 279–isoleucine 299, leucine 312–leucine 332, leucine 344–leucine 364, and methionine 382–isoleucine 402. Cu cation contacts are provided by histidine 280, histidine 330, and histidine 331. Positions 418 and 420 each coordinate heme b. The next 3 membrane-spanning stretches (helical) occupy residues alanine 423–tryptophan 443, phenylalanine 458–leucine 478, and alanine 512–valine 532.

The protein belongs to the heme-copper respiratory oxidase family. It depends on Cu(2+) as a cofactor. The cofactor is heme b.

It is found in the cell membrane. The catalysed reaction is 4 Fe(II)-[cytochrome c] + O2 + 8 H(+)(in) = 4 Fe(III)-[cytochrome c] + 2 H2O + 4 H(+)(out). It functions in the pathway energy metabolism; oxidative phosphorylation. In terms of biological role, cytochrome c oxidase is the component of the respiratory chain that catalyzes the reduction of oxygen to water. Subunits 1-3 form the functional core of the enzyme complex. Co I is the catalytic subunit of the enzyme. Electrons originating in cytochrome c or a quinol are transferred to the bimetallic center formed by a high-spin heme and copper B. The polypeptide is Cytochrome c oxidase subunit 1 homolog, bacteroid (fixN) (Bradyrhizobium diazoefficiens (strain JCM 10833 / BCRC 13528 / IAM 13628 / NBRC 14792 / USDA 110)).